Reading from the N-terminus, the 352-residue chain is Glycerol-1-phosphate dehydrogenase [NAD(P)+] (352 aa).

NAD(+) is bound by residues 99–103 and 121–124; these read GKSID and TVAS. Residue D126 coordinates substrate. S130 provides a ligand contact to NAD(+). D173 contacts substrate. Residues D173 and H253 each contribute to the Zn(2+) site. H257 is a binding site for substrate. Residue H269 coordinates Zn(2+).

Belongs to the glycerol-1-phosphate dehydrogenase family. Homodimer. Zn(2+) is required as a cofactor.

Its subcellular location is the cytoplasm. It catalyses the reaction sn-glycerol 1-phosphate + NAD(+) = dihydroxyacetone phosphate + NADH + H(+). The enzyme catalyses sn-glycerol 1-phosphate + NADP(+) = dihydroxyacetone phosphate + NADPH + H(+). Its pathway is membrane lipid metabolism; glycerophospholipid metabolism. Its activity is regulated as follows. Totally inhibited by EDTA in vitro. Its function is as follows. Catalyzes the NAD(P)H-dependent reduction of dihydroxyacetonephosphate (DHAP or glycerone phosphate) to glycerol 1-phosphate (G1P). The G1P thus generated is used as the glycerophosphate backbone of phospholipids in the cellular membranes of Archaea. Is also able to catalyze the reverse reaction, i.e. the NAD(+)-dependent oxidation of G1P but not of G3P. Is not active toward glycerol, dihydroxyacetone, glyceraldehyde phosphate, and glycerol-2-phosphate. This is Glycerol-1-phosphate dehydrogenase [NAD(P)+] (egsA) from Aeropyrum pernix (strain ATCC 700893 / DSM 11879 / JCM 9820 / NBRC 100138 / K1).